The chain runs to 1122 residues: Histone deacetylase 5 (1122 aa).

Residues 1 to 22 are disordered; sequence MNSPNESDGMSGREPSLEILPR. Lysine 35 is covalently cross-linked (Glycyl lysine isopeptide (Lys-Gly) (interchain with G-Cter in SUMO2)). Residues 196–281 form a disordered region; that stretch reads KEPTPGGLNH…KVAERRSSPL (86 aa). Basic and acidic residues predominate over residues 247–258; the sequence is DSRDDFPLRKTA. Residue serine 259 is modified to Phosphoserine; by AMPK, CaMK1, SIK1 and PKD/PRKD1. The span at 272 to 281 shows a compositional bias: basic and acidic residues; the sequence is KVAERRSSPL. Threonine 292 carries the phosphothreonine; by PKC modification. 2 disordered regions span residues 302–343 and 481–504; these read GAGP…NIPT and MRTVGKLPRHRPLSRTQSSPLPQS. Residues 312-327 show a composition bias toward low complexity; that stretch reads NSAPGSGPSSPNSSHS. Polar residues predominate over residues 328–340; the sequence is TIAENGFTGSVPN. Positions 494-504 are enriched in low complexity; sequence SRTQSSPLPQS. Serine 498 carries the phosphoserine; by AMPK, CaMK1, SIK1 and PKD/PRKD1 modification. Residue lysine 533 is modified to N6-acetyllysine. The interval 536 to 625 is disordered; it reads TKTGELPRQP…GPDLEEPGAG (90 aa). Over residues 581–621 the composition is skewed to acidic residues; that stretch reads STQEDLEEEDEEEDGEEEEDCIQVKDEEGESGAEEGPDLEE. 2 positions are modified to phosphoserine: serine 611 and serine 661. A histone deacetylase region spans residues 684 to 1028; it reads GVVYDTFMLK…VSALLSVELQ (345 aa). Zn(2+)-binding residues include cysteine 696, cysteine 698, histidine 704, and cysteine 781. Histidine 833 is a catalytic residue. The short motif at 1081–1122 is the Nuclear export signal element; it reads EEAETVSAMALLSVGAEQAQAAAAREHSPRPAEEPMEQEPAL. The segment at 1097–1122 is disordered; the sequence is EQAQAAAAREHSPRPAEEPMEQEPAL. Positions 1104 to 1113 are enriched in basic and acidic residues; the sequence is AREHSPRPAE. Serine 1108 carries the post-translational modification Phosphoserine.

The protein belongs to the histone deacetylase family. HD type 2 subfamily. In terms of assembly, interacts with AHRR, BAHD1, BCOR, HDAC7, HDAC9, CTBP1, MEF2C, NCOR2, NRIP1, PHB2 and a 14-3-3 chaperone protein. Interacts with BCL6, DDIT3/CHOP, GRK5, KDM5B and MYOCD. Interacts with EP300 in the presence of TFAP2C. Interacts with ANKRA2. Interacts with CUL7 (as part of the 3M complex); negatively regulated by ANKRA2. Interacts with ZBTB7B; the interaction allows the recruitment of HDAC4 on CD8 loci for deacetylation and possible inhibition of CD8 genes expression. Interacts with RARA. Post-translationally, phosphorylated by AMPK, CaMK1, SIK1 and PRKD1 at Ser-259 and Ser-498. The phosphorylation is required for the export to the cytoplasm and inhibition. Phosphorylated by the PKC kinases PKN1 and PKN2, impairing nuclear import. Phosphorylated by GRK5, leading to nuclear export of HDAC5 and allowing MEF2-mediated transcription. Ubiquitinated. Polyubiquitination however does not lead to its degradation.

The protein localises to the nucleus. It localises to the cytoplasm. It carries out the reaction N(6)-acetyl-L-lysyl-[histone] + H2O = L-lysyl-[histone] + acetate. In terms of biological role, responsible for the deacetylation of lysine residues on the N-terminal part of the core histones (H2A, H2B, H3 and H4). Histone deacetylation gives a tag for epigenetic repression and plays an important role in transcriptional regulation, cell cycle progression and developmental events. Histone deacetylases act via the formation of large multiprotein complexes. Involved in muscle maturation by repressing transcription of myocyte enhancer MEF2C. During muscle differentiation, it shuttles into the cytoplasm, allowing the expression of myocyte enhancer factors. Serves as a corepressor of RARA and causes its deacetylation. In association with RARA, plays a role in the repression of microRNA-10a and thereby in the inflammatory response. This Pongo abelii (Sumatran orangutan) protein is Histone deacetylase 5 (HDAC5).